The chain runs to 429 residues: Adenylosuccinate synthetase (429 aa).

Residues 12-18 (GDEGKGK) and 40-42 (GHT) each bind GTP. The active-site Proton acceptor is the D13. Positions 13 and 40 each coordinate Mg(2+). Residues 13–16 (DEGK), 38–41 (NAGH), T129, R143, Q224, T239, and R303 each bind IMP. The Proton donor role is filled by H41. 299-305 (ATTGRRR) provides a ligand contact to substrate. Residues R305, 331–333 (KLD), and 413–415 (SVG) contribute to the GTP site.

This sequence belongs to the adenylosuccinate synthetase family. As to quaternary structure, homodimer. Requires Mg(2+) as cofactor.

It is found in the cytoplasm. The catalysed reaction is IMP + L-aspartate + GTP = N(6)-(1,2-dicarboxyethyl)-AMP + GDP + phosphate + 2 H(+). Its pathway is purine metabolism; AMP biosynthesis via de novo pathway; AMP from IMP: step 1/2. Functionally, plays an important role in the de novo pathway of purine nucleotide biosynthesis. Catalyzes the first committed step in the biosynthesis of AMP from IMP. In Desulforapulum autotrophicum (strain ATCC 43914 / DSM 3382 / VKM B-1955 / HRM2) (Desulfobacterium autotrophicum), this protein is Adenylosuccinate synthetase.